A 417-amino-acid chain; its full sequence is Type II methyltransferase M.Eco47II (417 aa).

The SAM-dependent MTase C5-type domain occupies 81-414 (YTVLELFAGA…KSVVHLLDKI (334 aa)). The active site involves Cys-153.

Belongs to the class I-like SAM-binding methyltransferase superfamily. C5-methyltransferase family.

It catalyses the reaction a 2'-deoxycytidine in DNA + S-adenosyl-L-methionine = a 5-methyl-2'-deoxycytidine in DNA + S-adenosyl-L-homocysteine + H(+). Its function is as follows. A methylase that recognizes the double-stranded sequence 5'-GGNCC-3', methylates C-? on both strands, and protects the DNA from cleavage by both the Eco47I and Eco47II endonucleases. This chain is Type II methyltransferase M.Eco47II, found in Escherichia coli.